The sequence spans 195 residues: Acireductone dioxygenase 2 (195 aa).

Fe(2+) contacts are provided by His-94, His-96, Glu-100, and His-139. The Ni(2+) site is built by His-94, His-96, Glu-100, and His-139.

Belongs to the acireductone dioxygenase (ARD) family. Requires Fe(2+) as cofactor. It depends on Ni(2+) as a cofactor.

It is found in the cytoplasm. The protein resides in the nucleus. It catalyses the reaction 1,2-dihydroxy-5-(methylsulfanyl)pent-1-en-3-one + O2 = 4-methylsulfanyl-2-oxobutanoate + formate + 2 H(+). The catalysed reaction is 1,2-dihydroxy-5-(methylsulfanyl)pent-1-en-3-one + O2 = 3-(methylsulfanyl)propanoate + CO + formate + 2 H(+). Its pathway is amino-acid biosynthesis; L-methionine biosynthesis via salvage pathway; L-methionine from S-methyl-5-thio-alpha-D-ribose 1-phosphate: step 5/6. Catalyzes 2 different reactions between oxygen and the acireductone 1,2-dihydroxy-3-keto-5-methylthiopentene (DHK-MTPene) depending upon the metal bound in the active site. Fe-containing acireductone dioxygenase (Fe-ARD) produces formate and 2-keto-4-methylthiobutyrate (KMTB), the alpha-ketoacid precursor of methionine in the methionine recycle pathway. Ni-containing acireductone dioxygenase (Ni-ARD) produces methylthiopropionate, carbon monoxide and formate, and does not lie on the methionine recycle pathway. The protein is Acireductone dioxygenase 2 of Physcomitrium patens (Spreading-leaved earth moss).